A 978-amino-acid polypeptide reads, in one-letter code: Translation initiation factor IF-2 (978 aa).

Disordered stretches follow at residues 107–129 and 146–387; these read AEAP…NLEL and QEEE…HRVQ. Basic and acidic residues predominate over residues 146–169; that stretch reads QEEELSERRRQREEQEARSREASE. Positions 170-186 are enriched in low complexity; it reads KAAAVAAEAAEAAAAQA. Positions 215-259 are enriched in basic and acidic residues; sequence AEKEQHLAKEKGLAREKELAESKARAAEDVVRAADLGDRRRKAES. Low complexity-rich tracts occupy residues 295–326 and 349–361; these read KPAA…AGAG and PTRG…GAGR. Residues 375–386 show a composition bias toward basic and acidic residues; the sequence is GSSDRDRDDHRV. Residues 478-647 enclose the tr-type G domain; sequence PRAPVVTVMG…LLQAEVLELK (170 aa). Residues 487–494 are G1; it reads GHVDHGKT. 487 to 494 serves as a coordination point for GTP; the sequence is GHVDHGKT. The segment at 512 to 516 is G2; sequence GITQH. The interval 533-536 is G3; that stretch reads DTPG. GTP is bound by residues 533–537 and 587–590; these read DTPGH and NKID. Residues 587–590 form a G4 region; it reads NKID. The G5 stretch occupies residues 623-625; that stretch reads SAK.

Belongs to the TRAFAC class translation factor GTPase superfamily. Classic translation factor GTPase family. IF-2 subfamily.

Its subcellular location is the cytoplasm. In terms of biological role, one of the essential components for the initiation of protein synthesis. Protects formylmethionyl-tRNA from spontaneous hydrolysis and promotes its binding to the 30S ribosomal subunits. Also involved in the hydrolysis of GTP during the formation of the 70S ribosomal complex. The sequence is that of Translation initiation factor IF-2 from Albidiferax ferrireducens (strain ATCC BAA-621 / DSM 15236 / T118) (Rhodoferax ferrireducens).